We begin with the raw amino-acid sequence, 235 residues long: Large ribosomal subunit protein uL1 (235 aa).

This sequence belongs to the universal ribosomal protein uL1 family. In terms of assembly, part of the 50S ribosomal subunit.

Binds directly to 23S rRNA. The L1 stalk is quite mobile in the ribosome, and is involved in E site tRNA release. In terms of biological role, protein L1 is also a translational repressor protein, it controls the translation of the L11 operon by binding to its mRNA. This chain is Large ribosomal subunit protein uL1, found in Prochlorococcus marinus (strain MIT 9303).